A 422-amino-acid chain; its full sequence is UDP-N-acetylglucosamine 1-carboxyvinyltransferase (422 aa).

22–23 (KN) serves as a coordination point for phosphoenolpyruvate. Arginine 93 is a UDP-N-acetyl-alpha-D-glucosamine binding site. The active-site Proton donor is cysteine 117. Residue cysteine 117 is modified to 2-(S-cysteinyl)pyruvic acid O-phosphothioketal. UDP-N-acetyl-alpha-D-glucosamine contacts are provided by residues 122–126 (RPVDQ), aspartate 305, and isoleucine 327.

It belongs to the EPSP synthase family. MurA subfamily.

The protein resides in the cytoplasm. The catalysed reaction is phosphoenolpyruvate + UDP-N-acetyl-alpha-D-glucosamine = UDP-N-acetyl-3-O-(1-carboxyvinyl)-alpha-D-glucosamine + phosphate. It participates in cell wall biogenesis; peptidoglycan biosynthesis. In terms of biological role, cell wall formation. Adds enolpyruvyl to UDP-N-acetylglucosamine. The sequence is that of UDP-N-acetylglucosamine 1-carboxyvinyltransferase from Bordetella parapertussis (strain 12822 / ATCC BAA-587 / NCTC 13253).